The following is an 86-amino-acid chain: Co-chaperonin GroES (86 aa).

This sequence belongs to the GroES chaperonin family. In terms of assembly, heptamer of 7 subunits arranged in a ring. Interacts with the chaperonin GroEL.

It is found in the cytoplasm. Its function is as follows. Together with the chaperonin GroEL, plays an essential role in assisting protein folding. The GroEL-GroES system forms a nano-cage that allows encapsulation of the non-native substrate proteins and provides a physical environment optimized to promote and accelerate protein folding. GroES binds to the apical surface of the GroEL ring, thereby capping the opening of the GroEL channel. In Campylobacter concisus (strain 13826), this protein is Co-chaperonin GroES.